The chain runs to 204 residues: UPF0637 protein Lm4b_01081 (204 aa).

Belongs to the UPF0637 family.

This chain is UPF0637 protein Lm4b_01081, found in Listeria monocytogenes serotype 4b (strain CLIP80459).